Here is a 492-residue protein sequence, read N- to C-terminus: 2,3-bisphosphoglycerate-independent phosphoglycerate mutase (492 aa).

2 residues coordinate Mn(2+): aspartate 11 and serine 61. Serine 61 functions as the Phosphoserine intermediate in the catalytic mechanism. Substrate-binding positions include histidine 118, 147–148 (RD), arginine 177, arginine 183, 248–251 (RNDR), and lysine 321. 5 residues coordinate Mn(2+): aspartate 387, histidine 391, aspartate 428, histidine 429, and histidine 446.

This sequence belongs to the BPG-independent phosphoglycerate mutase family. As to quaternary structure, monomer. It depends on Mn(2+) as a cofactor.

It catalyses the reaction (2R)-2-phosphoglycerate = (2R)-3-phosphoglycerate. It functions in the pathway carbohydrate degradation; glycolysis; pyruvate from D-glyceraldehyde 3-phosphate: step 3/5. In terms of biological role, catalyzes the interconversion of 2-phosphoglycerate and 3-phosphoglycerate. This is 2,3-bisphosphoglycerate-independent phosphoglycerate mutase from Helicobacter acinonychis (strain Sheeba).